Consider the following 385-residue polypeptide: Putative transport protein BpOF4_00890 (385 aa).

A run of 8 helical transmembrane segments spans residues 42–62, 63–83, 93–113, 191–211, 255–275, 276–296, 304–324, and 350–370; these read TIWI…ILPV, SLPL…VNAL, VAVM…GYYI, SIPG…LFML, IIIF…VALL, MAFI…VILA, IVGD…LLII, and LGLM…VIAF.

This sequence belongs to the autoinducer-2 exporter (AI-2E) (TC 2.A.86) family.

The protein localises to the cell membrane. This chain is Putative transport protein BpOF4_00890, found in Alkalihalophilus pseudofirmus (strain ATCC BAA-2126 / JCM 17055 / OF4) (Bacillus pseudofirmus).